We begin with the raw amino-acid sequence, 61 residues long: Large ribosomal subunit protein uL30 (61 aa).

This sequence belongs to the universal ribosomal protein uL30 family. In terms of assembly, part of the 50S ribosomal subunit.

This Chlorobium limicola (strain DSM 245 / NBRC 103803 / 6330) protein is Large ribosomal subunit protein uL30.